The primary structure comprises 338 residues: MMNILVTGGSGFIGSALIRYIINHTQDFVINIDKLTYAANQSALREVENNPRYVFEKVDICDLNVIENIFEKYQPDAVMHLAAESHVDRSISGAADFVQTNIVGTYTLLEVAKNYWHTLDEAKKTTFRFHHISTDEVYGDLSLSEPAFTEQSPYHPSSPYSASKAASNHLVQAWHRTYGLPVIITNSSNNYGAYQHAEKLIPLMISNAVMGKPLPIYGDGQQIRDWLFVEDHVQASYLVLTKGRVGENYNIGGNCEKTNLEVVKRICQLLEELAPSKPNHIKYYEDLMTFVKDRPGHDVRYSLDCSKIHAELGWQPQITFEQGLRQTVKWYLFNSSSS.

NAD(+)-binding positions include 12–13 (FI), 33–36 (DKLT), 59–60 (DI), 81–85 (LAAES), and T100. Residue S85 coordinates substrate. T134 provides a ligand contact to substrate. D135 (proton donor) is an active-site residue. Catalysis depends on proton acceptor residues E136 and Y160. 160 to 164 (YSASK) is a binding site for NAD(+). N189 contacts substrate. Residue N190 coordinates NAD(+). Residues 199–200 (KL), 215–217 (PIY), R224, N259, and 293–297 (DRPGH) contribute to the substrate site.

This sequence belongs to the NAD(P)-dependent epimerase/dehydratase family. dTDP-glucose dehydratase subfamily. As to quaternary structure, homodimer. Requires NAD(+) as cofactor.

The enzyme catalyses dTDP-alpha-D-glucose = dTDP-4-dehydro-6-deoxy-alpha-D-glucose + H2O. It functions in the pathway carbohydrate biosynthesis; dTDP-L-rhamnose biosynthesis. Its pathway is bacterial outer membrane biogenesis; LPS O-antigen biosynthesis. Functionally, catalyzes the dehydration of dTDP-D-glucose to form dTDP-6-deoxy-D-xylo-4-hexulose via a three-step process involving oxidation, dehydration and reduction. This chain is dTDP-glucose 4,6-dehydratase (rffG), found in Haemophilus influenzae (strain ATCC 51907 / DSM 11121 / KW20 / Rd).